Here is a 471-residue protein sequence, read N- to C-terminus: Casein kinase 1-like protein 9 (471 aa).

A Protein kinase domain is found at 9 to 278 (FKLGRKIGSG…LKRLFRDLFI (270 aa)). ATP is bound by residues 15-23 (IGSGSFGEL) and Lys38. Asp128 serves as the catalytic Proton acceptor. The interval 300–471 (SSSGSSSRTR…RSLELLTLRK (172 aa)) is disordered. The segment covering 325–339 (EKQERIAGKETRENR) has biased composition (basic and acidic residues). Residues 385–430 (SSRYGSSSRRAIPSSSRPSSAGGPSDSRSSSRLVTSTGGVGTVSNR) are compositionally biased toward low complexity. A compositionally biased stretch (polar residues) spans 431 to 449 (ASTSQRIQAGNESRTSSFS). Residues 454-464 (NTREDPLRRSL) show a composition bias toward basic and acidic residues.

It belongs to the protein kinase superfamily. CK1 Ser/Thr protein kinase family. Casein kinase I subfamily. Monomer. In terms of processing, autophosphorylated on serine, threonine and tyrosine residues. As to expression, expressed in leaves, stems and flowers.

It localises to the cytoplasm. Its subcellular location is the nucleus. The catalysed reaction is L-seryl-[protein] + ATP = O-phospho-L-seryl-[protein] + ADP + H(+). It carries out the reaction L-threonyl-[protein] + ATP = O-phospho-L-threonyl-[protein] + ADP + H(+). Casein kinases are operationally defined by their preferential utilization of acidic proteins such as caseins as substrates. Can phosphorylate casein on serine and threonine residues, and poly(Glu,Tyr) in vitro. The chain is Casein kinase 1-like protein 9 from Arabidopsis thaliana (Mouse-ear cress).